Reading from the N-terminus, the 340-residue chain is Tartrate-resistant acid phosphatase type 5 (340 aa).

An N-terminal signal peptide occupies residues 1–20 (MDTWTVLLILQASLVLPGAV). Residues aspartate 41, aspartate 79, tyrosine 82, and asparagine 118 each contribute to the Fe cation site. Residues asparagine 124 and asparagine 155 are each glycosylated (N-linked (GlcNAc...) asparagine). A disulfide bond links cysteine 169 and cysteine 227. Positions 213, 248, and 250 each coordinate Fe cation.

The cofactor is Fe cation.

It is found in the secreted. The catalysed reaction is a phosphate monoester + H2O = an alcohol + phosphate. Uteroferrin is a phosphoprotein phosphatase, synthesized in response to progesterone. It appears to function in transplacental transport of iron in pig. This Sus scrofa (Pig) protein is Tartrate-resistant acid phosphatase type 5 (ACP5).